Here is a 252-residue protein sequence, read N- to C-terminus: Large ribosomal subunit protein uL4 (252 aa).

It belongs to the universal ribosomal protein uL4 family. As to quaternary structure, part of the 50S ribosomal subunit.

Its function is as follows. One of the primary rRNA binding proteins, this protein initially binds near the 5'-end of the 23S rRNA. It is important during the early stages of 50S assembly. It makes multiple contacts with different domains of the 23S rRNA in the assembled 50S subunit and ribosome. Functionally, forms part of the polypeptide exit tunnel. This is Large ribosomal subunit protein uL4 from Methanococcus maripaludis (strain DSM 14266 / JCM 13030 / NBRC 101832 / S2 / LL).